Reading from the N-terminus, the 393-residue chain is Flap endonuclease 1 (393 aa).

Residues 1-108 are N-domain; sequence MGVLGLSKLL…SELESRRQRA (108 aa). Mg(2+) is bound at residue aspartate 34. Arginine 74 provides a ligand contact to DNA. Mg(2+) is bound at residue aspartate 90. Over residues 99–120 the composition is skewed to basic and acidic residues; sequence SELESRRQRAEDAKHEFEKAKE. The segment at 99–127 is disordered; the sequence is SELESRRQRAEDAKHEFEKAKEEGDDEAM. Residues 126–257 form an I-domain region; that stretch reads AMEKMSKRMV…HKAWEGIKKY (132 aa). Positions 162, 164, 183, and 185 each coordinate Mg(2+). Glutamate 162 is a binding site for DNA. The DNA site is built by glycine 235 and aspartate 237. Aspartate 237 provides a ligand contact to Mg(2+). The interval 340–348 is interaction with PCNA; it reads TQGRLDQFF. The interval 358–393 is disordered; it reads NSEASTAGTKRNRGAVALPGVLQRKSSSGHKKAVKK. The span at 384 to 393 shows a compositional bias: basic residues; that stretch reads SSGHKKAVKK.

It belongs to the XPG/RAD2 endonuclease family. FEN1 subfamily. Interacts with PCNA. Three molecules of FEN1 bind to one PCNA trimer with each molecule binding to one PCNA monomer. PCNA stimulates the nuclease activity without altering cleavage specificity. Mg(2+) is required as a cofactor. In terms of processing, phosphorylated. Phosphorylation upon DNA damage induces relocalization to the nuclear plasma.

The protein resides in the nucleus. The protein localises to the nucleolus. It localises to the nucleoplasm. Its subcellular location is the mitochondrion. In terms of biological role, structure-specific nuclease with 5'-flap endonuclease and 5'-3' exonuclease activities involved in DNA replication and repair. During DNA replication, cleaves the 5'-overhanging flap structure that is generated by displacement synthesis when DNA polymerase encounters the 5'-end of a downstream Okazaki fragment. It enters the flap from the 5'-end and then tracks to cleave the flap base, leaving a nick for ligation. Also involved in the long patch base excision repair (LP-BER) pathway, by cleaving within the apurinic/apyrimidinic (AP) site-terminated flap. Acts as a genome stabilization factor that prevents flaps from equilibrating into structures that lead to duplications and deletions. Also possesses 5'-3' exonuclease activity on nicked or gapped double-stranded DNA, and exhibits RNase H activity. Also involved in replication and repair of rDNA and in repairing mitochondrial DNA. In Trypanosoma brucei brucei (strain 927/4 GUTat10.1), this protein is Flap endonuclease 1.